We begin with the raw amino-acid sequence, 185 residues long: Translation initiation factor IF-3, chloroplastic (185 aa).

This sequence belongs to the IF-3 family. In terms of assembly, monomer.

Its subcellular location is the plastid. The protein localises to the chloroplast. Its function is as follows. IF-3 binds to the 30S ribosomal subunit and shifts the equilibrium between 70S ribosomes and their 50S and 30S subunits in favor of the free subunits, thus enhancing the availability of 30S subunits on which protein synthesis initiation begins. This Cyanidium caldarium (Red alga) protein is Translation initiation factor IF-3, chloroplastic.